We begin with the raw amino-acid sequence, 86 residues long: Beta-toxin To4 (86 aa).

The first 20 residues, 1–20 (MTRFVLFISCFFLIGMIVEC), serve as a signal peptide directing secretion. An LCN-type CS-alpha/beta domain is found at 21 to 83 (KDGYLMEYGG…IWNRATNKCG (63 aa)). 4 disulfide bridges follow: Cys31–Cys82, Cys35–Cys57, Cys43–Cys63, and Cys47–Cys65. Cys82 is subject to Cysteine amide.

The protein belongs to the long (4 C-C) scorpion toxin superfamily. Sodium channel inhibitor family. Beta subfamily. As to expression, expressed by the venom gland.

Its subcellular location is the secreted. Beta toxins bind voltage-independently at site-4 of sodium channels (Nav) and shift the voltage of activation toward more negative potentials thereby affecting sodium channel activation and promoting spontaneous and repetitive firing. This toxin shows moderate inhibition of Nav1.1/SCN1A, Nav1.2/SCN2A, and Nav1.4/SCN4A, and promotes a left voltage shift on these channels. It exhibits similar potency on Nav1.2/SCN2A and Nav1.4/SCN4A (40-50% peak current inhibition at 0.5 uM), and weaker inhibition on Nav1.2 (20-30% peak current inhibition at 0.5 uM). The sequence is that of Beta-toxin To4 from Tityus obscurus (Amazonian scorpion).